The primary structure comprises 544 residues: Secreted aspartic protease 9 (544 aa).

Residues 1–17 form the signal peptide; sequence MRLNSVALLSLVATALA. The interval 31–50 is disordered; that stretch reads GESKDDLSPEDDSNPRFVKR. A Peptidase A1 domain is found at 65–479; it reads YMATLKIGSN…DLDDYEVSLA (415 aa). Residue Asp-83 is part of the active site. 83 to 85 provides a ligand contact to pepstatin A; it reads DTG. An intrachain disulfide couples Cys-98 to Cys-195. N-linked (GlcNAc...) asparagine glycans are attached at residues Asn-212, Asn-240, and Asn-252. The active site involves Asp-371. A pepstatin A-binding site is contributed by 371 to 375; the sequence is DTGST. Residues Cys-406 and Cys-441 are joined by a disulfide bond. Residues Asn-422 and Asn-499 are each glycosylated (N-linked (GlcNAc...) asparagine). A disordered region spans residues 500–519; that stretch reads SSGSGTTSSSGTSTSTSTRH. The GPI-anchor amidated serine moiety is linked to residue Ser-520. Residues 521 to 544 constitute a propeptide, removed in mature form; that stretch reads AGSIISKPVYGLLLSLLISCYVLV. A helical membrane pass occupies residues 524-544; the sequence is IISKPVYGLLLSLLISCYVLV.

The protein belongs to the peptidase A1 family. Monomer. The GPI-anchor is attached to the protein in the endoplasmic reticulum and serves to target the protein to the cell surface. There, the glucosamine-inositol phospholipid moiety is cleaved off and the GPI-modified mannoprotein is covalently attached via its lipidless GPI glycan remnant to the 1,6-beta-glucan of the outer cell wall layer.

It is found in the cell membrane. It localises to the secreted. The protein resides in the cell wall. The enzyme catalyses Preferential cleavage at the carboxyl of hydrophobic amino acids, but fails to cleave 15-Leu-|-Tyr-16, 16-Tyr-|-Leu-17 and 24-Phe-|-Phe-25 of insulin B chain. Activates trypsinogen, and degrades keratin.. In terms of biological role, secreted aspartic peptidases (SAPs) are a group of ten acidic hydrolases considered as key virulence factors. These enzymes supply the fungus with nutrient amino acids as well as are able to degrade the selected host's proteins involved in the immune defense. Moreover, acts toward human hemoglobin though limited proteolysis to generate a variety of antimicrobial hemocidins, enabling to compete with the other microorganisms of the same physiological niche using the microbicidal peptides generated from the host protein. Plays a key role in defense against host by cleaving histatin-5 (Hst 5), a peptide from human saliva that carries out fungicidal activity. The cleavage rate decreases in an order of SAP2 &gt; SAP9 &gt; SAP3 &gt; SAP7 &gt; SAP4 &gt; SAP1 &gt; SAP8. The first cleavage occurs between residues 'Lys-17' and 'His-18' of Hst 5, giving DSHAKRHHGYKRKFHEK and HHSHRGY peptides. Simultaneously, the DSHAKRHHGYKRK peptide is also formed. Further fragmentation by SAP9 results in FHEK product. In Candida albicans (strain SC5314 / ATCC MYA-2876) (Yeast), this protein is Secreted aspartic protease 9.